The sequence spans 473 residues: DNA gyrase subunit A (473 aa).

The Topo IIA-type catalytic domain occupies 1 to 473; that stretch reads MGNYHPHGNA…GFVSHNTEAR (473 aa). Catalysis depends on Tyr49, which acts as the O-(5'-phospho-DNA)-tyrosine intermediate. A DOD-type homing endonuclease domain is found at 175–315; that stretch reads LLGAFISEGF…VQQMLLEFGI (141 aa).

This sequence belongs to the type II topoisomerase GyrA/ParC subunit family. Heterotetramer, composed of two GyrA and two GyrB chains. In the heterotetramer, GyrA contains the active site tyrosine that forms a transient covalent intermediate with DNA, while GyrB binds cofactors and catalyzes ATP hydrolysis. This protein undergoes a protein self splicing that involves a post-translational excision of the intervening region (intein) followed by peptide ligation.

The protein localises to the cytoplasm. The catalysed reaction is ATP-dependent breakage, passage and rejoining of double-stranded DNA.. In terms of biological role, a type II topoisomerase that negatively supercoils closed circular double-stranded (ds) DNA in an ATP-dependent manner to modulate DNA topology and maintain chromosomes in an underwound state. Negative supercoiling favors strand separation, and DNA replication, transcription, recombination and repair, all of which involve strand separation. Also able to catalyze the interconversion of other topological isomers of dsDNA rings, including catenanes and knotted rings. Type II topoisomerases break and join 2 DNA strands simultaneously in an ATP-dependent manner. In Mycobacterium malmoense, this protein is DNA gyrase subunit A (gyrA).